The following is a 656-amino-acid chain: Vacuolar amino acid transporter 3 (656 aa).

The disordered stretch occupies residues 1–109 (MSNSQSIKIK…VPSTSEDPDV (109 aa)). Residues 15–28 (NENFASGSYSSRRS) show a composition bias toward polar residues. A phosphoserine mark is found at S37 and S53. The span at 50–71 (ISPSESNLPNNVAENTTDTPVN) shows a compositional bias: polar residues. The segment covering 75–97 (IRDENHNSRKGKDVTLNSDEAHS) has biased composition (basic and acidic residues). S172 carries the post-translational modification Phosphoserine. Helical transmembrane passes span 280-300 (AVLLLLKSFVGTGVLFLPKAF), 307-327 (FSSATLLIVGVLSHICFLLLI), 351-371 (FAILASIVVSQIGFSSAYISF), 389-409 (EYHLAVFIFIQFLVFVPLSLV), 419-439 (ALIADVFILLGILYLYFWDVI), 457-477 (FSLFIGVAIFTYEGICLILPI), 494-514 (VMAAISLLFISIGLLSYAAFG), 537-557 (LYAIAILLSTPLQLFPAIAII), 578-598 (YLRVLIVILAILISWAGSSRL), 601-621 (FVSMVGSVCCIPLIYMYPPML), and 636-656 (DIFMFTIGAFAMAFTTYMTFF).

This sequence belongs to the amino acid/polyamine transporter 2 family.

It is found in the endoplasmic reticulum membrane. Its subcellular location is the vacuole membrane. Its function is as follows. Involved in amino acid efflux from the vacuole to the cytoplasm. Capable of transporting large neutral amino acids including tyrosine, glutamine, asparagine, isoleucine and leucine. Required for spore formation. In Schizosaccharomyces pombe (strain 972 / ATCC 24843) (Fission yeast), this protein is Vacuolar amino acid transporter 3 (avt3).